The chain runs to 306 residues: GTP cyclohydrolase FolE2 (306 aa).

It belongs to the GTP cyclohydrolase IV family.

The enzyme catalyses GTP + H2O = 7,8-dihydroneopterin 3'-triphosphate + formate + H(+). Its pathway is cofactor biosynthesis; 7,8-dihydroneopterin triphosphate biosynthesis; 7,8-dihydroneopterin triphosphate from GTP: step 1/1. In terms of biological role, converts GTP to 7,8-dihydroneopterin triphosphate. The sequence is that of GTP cyclohydrolase FolE2 from Pseudoalteromonas atlantica (strain T6c / ATCC BAA-1087).